The sequence spans 256 residues: 5-keto-4-deoxy-D-glucarate aldolase (256 aa).

Histidine 50 serves as the catalytic Proton acceptor. Residue glutamine 151 participates in substrate binding. Glutamate 153 contacts Mg(2+). Serine 178 and aspartate 179 together coordinate substrate. Aspartate 179 lines the Mg(2+) pocket.

This sequence belongs to the HpcH/HpaI aldolase family. KDGluc aldolase subfamily. Homohexamer; trimer of dimers. Mg(2+) is required as a cofactor.

It catalyses the reaction 5-dehydro-4-deoxy-D-glucarate = 2-hydroxy-3-oxopropanoate + pyruvate. The enzyme catalyses 2-dehydro-3-deoxy-D-glucarate = 2-hydroxy-3-oxopropanoate + pyruvate. Its pathway is carbohydrate acid metabolism; galactarate degradation; D-glycerate from galactarate: step 2/3. Catalyzes the reversible retro-aldol cleavage of both 5-keto-4-deoxy-D-glucarate and 2-keto-3-deoxy-D-glucarate to pyruvate and tartronic semialdehyde. The polypeptide is 5-keto-4-deoxy-D-glucarate aldolase (Enterobacter sp. (strain 638)).